Consider the following 241-residue polypeptide: ATP synthase subunit a (241 aa).

A run of 7 helical transmembrane segments spans residues 29–49 (NSSLFMMISVVSVILFLLLGV), 86–106 (IPLVFTVFTFTLSCNLVGMLP), 114–134 (HVIVTFALSMIVFTYTTIVGF), 144–164 (ILLPEGIPSWLAPMMVFIKLF), 177–197 (LAANMIAGHTIIKVVAGFIMN), 200–220 (LILTPIPFLFIIALIGFEVFV), and 221–241 (AILQAYIFTILTCIYLSDAVK).

This sequence belongs to the ATPase A chain family. As to quaternary structure, F-type ATPases have 2 components, CF(1) - the catalytic core - and CF(0) - the membrane proton channel. CF(1) has five subunits: alpha(3), beta(3), gamma(1), delta(1), epsilon(1). CF(0) has three main subunits: a(1), b(2) and c(9-12). The alpha and beta chains form an alternating ring which encloses part of the gamma chain. CF(1) is attached to CF(0) by a central stalk formed by the gamma and epsilon chains, while a peripheral stalk is formed by the delta and b chains.

The protein resides in the cell membrane. In terms of biological role, key component of the proton channel; it plays a direct role in the translocation of protons across the membrane. The polypeptide is ATP synthase subunit a (Wolbachia sp. subsp. Brugia malayi (strain TRS)).